Here is an 88-residue protein sequence, read N- to C-terminus: Sec-independent protein translocase protein TatA (88 aa).

The helical transmembrane segment at 1-21 (MNLGPTEILLILVIVVLLFGA) threads the bilayer. Positions 46–56 (SNDDQRYEEQQ) are enriched in basic and acidic residues. Residues 46–88 (SNDDQRYEEQQQQRQIAAQAQQQVVNPVEIPQPQPTDIQRPQQ) are disordered. Over residues 57–68 (QQRQIAAQAQQQ) the composition is skewed to low complexity.

Belongs to the TatA/E family. In terms of assembly, the Tat system comprises two distinct complexes: a TatABC complex, containing multiple copies of TatA, TatB and TatC subunits, and a separate TatA complex, containing only TatA subunits. Substrates initially bind to the TatABC complex, which probably triggers association of the separate TatA complex to form the active translocon.

The protein localises to the cell membrane. In terms of biological role, part of the twin-arginine translocation (Tat) system that transports large folded proteins containing a characteristic twin-arginine motif in their signal peptide across membranes. TatA could form the protein-conducting channel of the Tat system. The protein is Sec-independent protein translocase protein TatA of Corynebacterium diphtheriae (strain ATCC 700971 / NCTC 13129 / Biotype gravis).